A 134-amino-acid polypeptide reads, in one-letter code: MRGVFFVAVAVAIFARSSAEAKLLSEAAPGLAADAVISGESRERFLRVADSEDDDLAAPADDGKTEERAPKFKSLSEINKKLDEEVMVHVSKILGNMGAIHADNIAKARAALEAAHKSGDITDKQLAAGLAKLV.

A signal peptide spans M1–A21. Positions R44 to R68 match the RxLR-dEER motif. The tract at residues D50–F72 is disordered. A compositionally biased stretch (basic and acidic residues) spans D61–P70.

Belongs to the RxLR effector family.

It localises to the secreted. The protein resides in the host cytoplasm. The protein localises to the host nucleus. Effector that, due to the lack of a histidine residue at position 79, is not able to induce cell death in tomato, tobacco, eggplant, potato, or in A.thaliana. The protein is RxLR effector protein Avh238 of Phytophthora sojae (Soybean stem and root rot agent).